A 113-amino-acid chain; its full sequence is Large ribosomal subunit protein bL17 (113 aa).

This sequence belongs to the bacterial ribosomal protein bL17 family. As to quaternary structure, part of the 50S ribosomal subunit. Contacts protein L32.

In Clostridium botulinum (strain Loch Maree / Type A3), this protein is Large ribosomal subunit protein bL17.